The chain runs to 476 residues: MSTRNVMITDLDQPDPNQQQHHQNPKKNRKVLQTLSGNFNRRSRSVEVEVKRQDNLGVVHKDRKKDRSFNSLLQAKDQQLEQLVQRLATLHRYNDQFAKENDQLRKDSGQLERRLTEAEQQVANCSRCQQLGQRLDTVLAQNRTLAGDVDMLKTLVFRLNVQIESYQDQRRLGEGAPTCGGSTKVSSSSAPYPPLPTHTLGPLLQAYDESLRDKDALLAQYNTEFEHFTGELKRALEENTKLLQSQEQLRRDLGGWREERVCLQAQLGVCRSKAEAQTRKTDLAKEKLVEVMHCYEQRMQTLILDMDHLQAAYARTKSELAALKSASSAAPAAVAPPVPAESEALHQCKALLEQLRQEHARERTCLQEQLQATTARAASLVRSTEKAKHSRDRLKARLRMALQWAQKLEAGQAEVRDTYEAVRRLEVLVQHKESQLRGLHARNAEEMDKLRHKLQQKEETICALLRGKMERRPAVD.

Disordered regions lie at residues 1-29 (MSTR…KKNR) and 172-193 (LGEG…APYP). The span at 180–190 (GGSTKVSSSSA) shows a compositional bias: polar residues.

Its subcellular location is the cytoplasm. The protein resides in the cytosol. It is found in the mitochondrion intermembrane space. Functionally, required for mitochondrial complex IV activity. May be involved in non-associative learning. The sequence is that of Protein Cep89 homolog (Cep89) from Drosophila melanogaster (Fruit fly).